A 394-amino-acid polypeptide reads, in one-letter code: 3-phenylpropionate/cinnamic acid dioxygenase ferredoxin--NAD(+) reductase component (394 aa).

Position 5-36 (5-36) interacts with FAD; the sequence is TFIIVGAGQAGAMAAATLRQQQFDGDIILIGK. 146 to 174 provides a ligand contact to NAD(+); sequence RILIVGGGVIGLELAATSCELGANVTVIE.

Belongs to the bacterial ring-hydroxylating dioxygenase ferredoxin reductase family. In terms of assembly, this dioxygenase system consists of four proteins: the two subunits of the hydroxylase component (HcaE and HcaF), a ferredoxin (HcaC) and a ferredoxin reductase (HcaD). Requires FAD as cofactor.

It carries out the reaction 2 reduced [2Fe-2S]-[ferredoxin] + NAD(+) + H(+) = 2 oxidized [2Fe-2S]-[ferredoxin] + NADH. It participates in aromatic compound metabolism; 3-phenylpropanoate degradation. Its function is as follows. Part of the multicomponent 3-phenylpropionate dioxygenase, that converts 3-phenylpropionic acid (PP) and cinnamic acid (CI) into 3-phenylpropionate-dihydrodiol (PP-dihydrodiol) and cinnamic acid-dihydrodiol (CI-dihydrodiol), respectively. This chain is 3-phenylpropionate/cinnamic acid dioxygenase ferredoxin--NAD(+) reductase component, found in Photorhabdus laumondii subsp. laumondii (strain DSM 15139 / CIP 105565 / TT01) (Photorhabdus luminescens subsp. laumondii).